We begin with the raw amino-acid sequence, 588 residues long: Proline--tRNA ligase (588 aa).

It belongs to the class-II aminoacyl-tRNA synthetase family. ProS type 1 subfamily. In terms of assembly, homodimer.

The protein resides in the cytoplasm. The catalysed reaction is tRNA(Pro) + L-proline + ATP = L-prolyl-tRNA(Pro) + AMP + diphosphate. Catalyzes the attachment of proline to tRNA(Pro) in a two-step reaction: proline is first activated by ATP to form Pro-AMP and then transferred to the acceptor end of tRNA(Pro). As ProRS can inadvertently accommodate and process non-cognate amino acids such as alanine and cysteine, to avoid such errors it has two additional distinct editing activities against alanine. One activity is designated as 'pretransfer' editing and involves the tRNA(Pro)-independent hydrolysis of activated Ala-AMP. The other activity is designated 'posttransfer' editing and involves deacylation of mischarged Ala-tRNA(Pro). The misacylated Cys-tRNA(Pro) is not edited by ProRS. The polypeptide is Proline--tRNA ligase (Corynebacterium glutamicum (strain R)).